Reading from the N-terminus, the 245-residue chain is Ureidoacrylate amidohydrolase RutB (245 aa).

Aspartate 41 functions as the Proton acceptor in the catalytic mechanism. Residue lysine 150 is part of the active site. Catalysis depends on cysteine 183, which acts as the Nucleophile.

It belongs to the isochorismatase family. RutB subfamily.

The enzyme catalyses (Z)-3-ureidoacrylate + H2O + H(+) = (Z)-3-aminoacrylate + NH4(+) + CO2. The catalysed reaction is (Z)-3-ureidoacrylate + H2O = (Z)-3-aminoacrylate + carbamate + H(+). It carries out the reaction (Z)-2-methylureidoacrylate + H2O + H(+) = (Z)-2-methylaminoacrylate + NH4(+) + CO2. Its function is as follows. Hydrolyzes ureidoacrylate to form aminoacrylate and carbamate. The carbamate hydrolyzes spontaneously, thereby releasing one of the nitrogen atoms of the pyrimidine ring as ammonia and one of its carbon atoms as CO2. In Pseudomonas syringae pv. syringae (strain B728a), this protein is Ureidoacrylate amidohydrolase RutB.